The following is a 230-amino-acid chain: MHTKVLQQGLWALLLWPHLFTVSVPLDCRDDQASLARCPSISQEKLLDRVIHHAELIYRVSEESCSLFEEMFIPLPLRLQSNQGGYACITKALPIPSSKSEIQQLSDKWLLHSVLMLVQSWIEPLVYLQMTLDRYDHAPDMLLNKTKWVSEKLISLEQGVVVLIKKMLDEGAMTTTYSEQGAFQYDVQLEMLEYVMRDYTLLTCLKKDAHKMETFLKLLKCRQTDKYNCA.

The N-terminal stretch at 1–25 (MHTKVLQQGLWALLLWPHLFTVSVP) is a signal peptide. Intrachain disulfides connect C28–C38, C88–C204, and C221–C229. N-linked (GlcNAc...) asparagine glycosylation is present at N144.

This sequence belongs to the somatotropin/prolactin family.

It localises to the secreted. Its function is as follows. Selectively regulates proliferation and morphogenesis of neural-crest derived pigment cells. The sequence is that of Somatolactin from Oryzias latipes (Japanese rice fish).